The primary structure comprises 563 residues: Tripeptidyl-peptidase 1 (563 aa).

An N-terminal signal peptide occupies residues 1–19 (MGLQACLLGLFALILSGKC). Positions 20-195 (SYSPEPDQRR…PEPQVTGTVG (176 aa)) are cleaved as a propeptide — removed in mature form. A disulfide bridge links C111 with C122. The 365-residue stretch at 199–563 (GVTPSVIRKR…PALLKTLLNP (365 aa)) folds into the Peptidase S53 domain. N-linked (GlcNAc...) asparagine glycans are attached at residues N210 and N222. Active-site charge relay system residues include E272 and D276. Residues N286, N313, and N443 are each glycosylated (N-linked (GlcNAc...) asparagine). 2 disulfides stabilise this stretch: C365-C526 and C522-C537. S475 serves as the catalytic Charge relay system. Ca(2+)-binding residues include D517 and V518. Positions 539, 541, and 543 each coordinate Ca(2+).

In terms of assembly, monomer. Interacts with CLN5. Interacts with CLN3. The cofactor is Ca(2+). Activated by autocatalytic proteolytical processing upon acidification. N-glycosylation is required for processing and activity.

Its subcellular location is the lysosome. The protein resides in the melanosome. The catalysed reaction is Release of an N-terminal tripeptide from a polypeptide, but also has endopeptidase activity.. Its function is as follows. Lysosomal serine protease with tripeptidyl-peptidase I activity. May act as a non-specific lysosomal peptidase which generates tripeptides from the breakdown products produced by lysosomal proteinases. Requires substrates with an unsubstituted N-terminus. The polypeptide is Tripeptidyl-peptidase 1 (TPP1) (Macaca fascicularis (Crab-eating macaque)).